Here is a 334-residue protein sequence, read N- to C-terminus: Malate dehydrogenase, cytoplasmic (334 aa).

S2 is modified (N-acetylserine). Residues G11 to A17 and D42 each bind NAD(+). Substrate contacts are provided by R92 and R98. Residue N105 participates in NAD(+) binding. K110 is subject to N6-succinyllysine. An NAD(+)-binding site is contributed by Q112. N6-acetyllysine occurs at positions 118 and 121. V129–N131 contacts NAD(+). 2 residues coordinate substrate: N131 and R162. Residue H187 is the Proton acceptor of the active site. K214 is subject to N6-succinyllysine. Residue S217 is modified to Phosphoserine. Position 230 is an omega-N-methylarginine (R230). S241 is modified (phosphoserine). At K298 the chain carries N6-acetyllysine; alternate. K298 carries the post-translational modification N6-succinyllysine; alternate. S309 bears the Phosphoserine mark. At K318 the chain carries N6-succinyllysine. A Phosphoserine modification is found at S333.

Belongs to the LDH/MDH superfamily. MDH type 2 family. In terms of assembly, homodimer. ISGylated. Post-translationally, acetylation at Lys-118 dramatically enhances enzymatic activity and promotes adipogenic differentiation.

It localises to the cytoplasm. It is found in the cytosol. It carries out the reaction (S)-malate + NAD(+) = oxaloacetate + NADH + H(+). The enzyme catalyses (2R)-2-hydroxy-3-(4-hydroxyphenyl)propanoate + NAD(+) = 3-(4-hydroxyphenyl)pyruvate + NADH + H(+). The catalysed reaction is (S)-2-hydroxyglutarate + NAD(+) = 2-oxoglutarate + NADH + H(+). In terms of biological role, catalyzes the reduction of aromatic alpha-keto acids in the presence of NADH. Plays essential roles in the malate-aspartate shuttle and the tricarboxylic acid cycle, important in mitochondrial NADH supply for oxidative phosphorylation. Catalyzes the reduction of 2-oxoglutarate to 2-hydroxyglutarate, leading to elevated reactive oxygen species (ROS). The sequence is that of Malate dehydrogenase, cytoplasmic (MDH1) from Bos taurus (Bovine).